The following is a 491-amino-acid chain: Synaptotagmin-9 (491 aa).

Residues 1-52 are Vesicular-facing; sequence MPGARDALCHQALQLLAELCARGALEHDSCQDFIYHLRDRARPRLRDPDISV. The cysteine motif stretch occupies residues 9–31; sequence CHQALQLLAELCARGALEHDSCQ. The chain crosses the membrane as a helical span at residues 53-73; it reads SLLTLVVTACGLALFGVSLFV. Residues 74–491 lie on the Cytoplasmic side of the membrane; the sequence is SWKLCWVPWR…AHWHSLVEKR (418 aa). Ser177 is subject to Phosphoserine. 2 consecutive C2 domains span residues 220 to 341 and 352 to 485; these read ACGK…ILWK and DLGE…AHWH. Ca(2+)-binding residues include Asp251, Asp257, Asp309, Phe310, Asp311, Ser314, Asp317, Asp383, Asp389, Asp443, and Asp445.

Belongs to the synaptotagmin family. Homodimer; disulfide-linked via the cysteine motif. Can also form heterodimers with SYT3, SYT6, SYT7 and SYT10. Requires Ca(2+) as cofactor.

The protein localises to the cytoplasmic vesicle. The protein resides in the secretory vesicle. It localises to the synaptic vesicle membrane. May be involved in Ca(2+)-dependent exocytosis of secretory vesicles through Ca(2+) and phospholipid binding to the C2 domain or may serve as Ca(2+) sensors in the process of vesicular trafficking and exocytosis. The protein is Synaptotagmin-9 (SYT9) of Homo sapiens (Human).